We begin with the raw amino-acid sequence, 49 residues long: Toxic protein HokB (49 aa).

A helical transmembrane segment spans residues N4 to T24.

Belongs to the Hok/Gef family.

It localises to the cell inner membrane. In terms of biological role, toxic component of a type I toxin-antitoxin (TA) system. When overexpressed kills cells within minutes; causes collapse of the transmembrane potential and arrest of respiration. Expression leads to membrane depolarization; when protein levels are high enough depolarization probably leads to lowered metabolic activity which in turn induces some cells to enter the persistent state in which they transiently survive antibiotic exposure. Its toxic effect is probably neutralized by antisense antitoxin RNA SokB, which is encoded in trans on the opposite DNA strand. In Escherichia coli (strain K12), this protein is Toxic protein HokB.